A 256-amino-acid polypeptide reads, in one-letter code: Eukaryotic translation initiation factor 3 subunit J (256 aa).

Residues 1–67 (MAAAAAGDSD…KEEAEVKPEV (67 aa)) are sufficient for interaction with EIF3B. Positions 1-106 (MAAAAAGDSD…LEEPEEPKVL (106 aa)) are disordered. Phosphoserine occurs at positions 9, 11, and 18. Positions 38 to 57 (EGEDEDEDVKDNWDDDDDEK) are enriched in acidic residues. A compositionally biased stretch (basic and acidic residues) spans 58–104 (KEEAEVKPEVKISEKKKIAEKIKEKERQQKKRQEEIKKRLEEPEEPK). The stretch at 68-133 (KISEKKKIAE…ESDLELAKET (66 aa)) forms a coiled coil. Lys-104 participates in a covalent cross-link: Glycyl lysine isopeptide (Lys-Gly) (interchain with G-Cter in SUMO2). Position 107 is a phosphothreonine (Thr-107). The residue at position 125 (Ser-125) is a Phosphoserine. The disordered stretch occupies residues 214–243 (QSKAKKKKKGVVPGGGLKATMKDDLADYGG). The segment at 241–256 (YGGYDGGYAQDYEDFM) is promotes stable association with the 40S ribosome. Tyr-252 carries the post-translational modification Phosphotyrosine.

Belongs to the eIF-3 subunit J family. In terms of assembly, component of the eukaryotic translation initiation factor 3 (eIF-3) complex, which is composed of 13 subunits: EIF3A, EIF3B, EIF3C, EIF3D, EIF3E, EIF3F, EIF3G, EIF3H, EIF3I, EIF3J, EIF3K, EIF3L and EIF3M. The eIF-3 complex appears to include 3 stable modules: module A is composed of EIF3A, EIF3B, EIF3G and EIF3I; module B is composed of EIF3F, EIF3H, and EIF3M; and module C is composed of EIF3C, EIF3D, EIF3E, EIF3K and EIF3L. EIF3C of module C binds EIF3B of module A and EIF3H of module B, thereby linking the three modules. EIF3J is a labile subunit that binds to the eIF-3 complex via EIF3B. The eIF-3 complex interacts with RPS6KB1 under conditions of nutrient depletion. Mitogenic stimulation leads to binding and activation of a complex composed of MTOR and RPTOR, leading to phosphorylation and release of RPS6KB1 and binding of EIF4B to eIF-3. In terms of processing, phosphorylated. Phosphorylation is enhanced upon serum stimulation.

It localises to the cytoplasm. In terms of biological role, component of the eukaryotic translation initiation factor 3 (eIF-3) complex, which is required for several steps in the initiation of protein synthesis. The eIF-3 complex associates with the 40S ribosome and facilitates the recruitment of eIF-1, eIF-1A, eIF-2:GTP:methionyl-tRNAi and eIF-5 to form the 43S pre-initiation complex (43S PIC). The eIF-3 complex stimulates mRNA recruitment to the 43S PIC and scanning of the mRNA for AUG recognition. The eIF-3 complex is also required for disassembly and recycling of post-termination ribosomal complexes and subsequently prevents premature joining of the 40S and 60S ribosomal subunits prior to initiation. The eIF-3 complex specifically targets and initiates translation of a subset of mRNAs involved in cell proliferation, including cell cycling, differentiation and apoptosis, and uses different modes of RNA stem-loop binding to exert either translational activation or repression. This subunit binds directly within the mRNA entry channel of the 40S ribosome to the aminoacyl (A) site. It may regulate the interaction between the 43S PIC and mRNA. The sequence is that of Eukaryotic translation initiation factor 3 subunit J from Bos taurus (Bovine).